The following is a 153-amino-acid chain: MAL-like protein (153 aa).

Helical transmembrane passes span 22 to 42, 59 to 79, 97 to 117, and 131 to 151; these read LFLT…FLVW, VMYV…SYLF, GTTG…TIVS, and AASF…FSIY. One can recognise an MARVEL domain in the interval 22–153; it reads LFLTIPFAFF…ILHAFSIYYH (132 aa).

The protein belongs to the MAL family.

It localises to the membrane. The sequence is that of MAL-like protein (MALL) from Homo sapiens (Human).